Here is a 1634-residue protein sequence, read N- to C-terminus: Protein TIC 214 (1634 aa).

The next 5 helical transmembrane spans lie at 25 to 45 (FIIG…YVAL), 53 to 73 (ILAL…SFFA), 94 to 116 (HFIL…LITI), 133 to 153 (FAWF…LVWI), and 172 to 192 (IFVI…SIQC). 2 disordered regions span residues 216 to 242 (RERL…SESE) and 1365 to 1395 (QQKS…STKS). Residues 1386 to 1395 (KYLEEDSTKS) are compositionally biased toward basic and acidic residues.

It belongs to the TIC214 family. Part of the Tic complex.

It is found in the plastid. The protein localises to the chloroplast inner membrane. Functionally, involved in protein precursor import into chloroplasts. May be part of an intermediate translocation complex acting as a protein-conducting channel at the inner envelope. The polypeptide is Protein TIC 214 (Cuscuta exaltata (Tall dodder)).